The sequence spans 282 residues: Heat stress transcription factor A-6a (282 aa).

Residues 17 to 111 (PTAFLTKTYN…LLKNIKRRKT (95 aa)) mediate DNA binding. The hydrophobic repeat HR-A/B stretch occupies residues 111 to 177 (TSSQTQTQSL…MMMNFLLKKI (67 aa)). Positions 175–190 (KKIKKPSFLQSLRKRN) match the Bipartite nuclear localization signal motif. The AHA signature appears at 261-270 (EGIWKGFVLS).

The protein belongs to the HSF family. Class A subfamily. Homotrimer. Post-translationally, exhibits temperature-dependent phosphorylation.

Its subcellular location is the nucleus. In terms of biological role, transcriptional activator that specifically binds DNA sequence 5'-AGAAnnTTCT-3' known as heat shock promoter elements (HSE). The chain is Heat stress transcription factor A-6a (HSFA6A) from Arabidopsis thaliana (Mouse-ear cress).